Here is a 478-residue protein sequence, read N- to C-terminus: UDP-N-acetylmuramate--L-alanine ligase (478 aa).

This sequence belongs to the MurCDEF family.

The protein localises to the cytoplasm. It carries out the reaction UDP-N-acetyl-alpha-D-muramate + L-alanine + ATP = UDP-N-acetyl-alpha-D-muramoyl-L-alanine + ADP + phosphate + H(+). It functions in the pathway cell wall biogenesis; peptidoglycan biosynthesis. Its function is as follows. Cell wall formation. The chain is UDP-N-acetylmuramate--L-alanine ligase (murC) from Synechococcus elongatus (strain ATCC 33912 / PCC 7942 / FACHB-805) (Anacystis nidulans R2).